We begin with the raw amino-acid sequence, 376 residues long: Lipid-A-disaccharide synthase (376 aa).

Belongs to the LpxB family.

It carries out the reaction a lipid X + a UDP-2-N,3-O-bis[(3R)-3-hydroxyacyl]-alpha-D-glucosamine = a lipid A disaccharide + UDP + H(+). Its pathway is bacterial outer membrane biogenesis; LPS lipid A biosynthesis. Functionally, condensation of UDP-2,3-diacylglucosamine and 2,3-diacylglucosamine-1-phosphate to form lipid A disaccharide, a precursor of lipid A, a phosphorylated glycolipid that anchors the lipopolysaccharide to the outer membrane of the cell. In Coxiella burnetii (strain RSA 331 / Henzerling II), this protein is Lipid-A-disaccharide synthase.